Consider the following 617-residue polypeptide: 1-deoxy-D-xylulose-5-phosphate synthase (617 aa).

Residues H76 and 117 to 119 each bind thiamine diphosphate; that span reads GHS. Residue D148 coordinates Mg(2+). Thiamine diphosphate contacts are provided by residues 149 to 150, N177, Y285, and E366; that span reads GA. Residue N177 coordinates Mg(2+).

This sequence belongs to the transketolase family. DXPS subfamily. In terms of assembly, homodimer. The cofactor is Mg(2+). Requires thiamine diphosphate as cofactor.

It catalyses the reaction D-glyceraldehyde 3-phosphate + pyruvate + H(+) = 1-deoxy-D-xylulose 5-phosphate + CO2. It functions in the pathway metabolic intermediate biosynthesis; 1-deoxy-D-xylulose 5-phosphate biosynthesis; 1-deoxy-D-xylulose 5-phosphate from D-glyceraldehyde 3-phosphate and pyruvate: step 1/1. Its function is as follows. Catalyzes the acyloin condensation reaction between C atoms 2 and 3 of pyruvate and glyceraldehyde 3-phosphate to yield 1-deoxy-D-xylulose-5-phosphate (DXP). The chain is 1-deoxy-D-xylulose-5-phosphate synthase from Histophilus somni (strain 2336) (Haemophilus somnus).